The chain runs to 684 residues: MARIKKRGESGAAKNYITRNQSLKKLQITLAEFRRLCILKGIFPRQPRHVKRANKGSTAPTTFYYTKDIAYLQHEPVLQAFRDHKAFAKKVNRAIARREWHAAKNLDENRPKYRLDHIIKERYPTFVDSLRDLDDALSTLFLFANIPSQKSMAPEITAHCARLCAEWQLYVMRTHCLSKVFLSIKGIYFQAVVHGQEITWLVPYMFTQTIPTDVDFRVMMTFLELYQTLMGFVLFKLYTDENLVYPPKLDESLDNQGAGFGSLMLMAADADVLTGKHSLRPMDDAAAAEASSNAITRKDGKKLSTRDVKRQIAQLTRSEDKAEHEPEDDESMPALDATMQDQDSDEEADDEAGAADAFVAHASKTQGAGADQLTTLRDLQKQAGEDPLPMLFSRYVFYISREVPRTVFEFILRSFGASPSNVGWDPVAGAGSQVAVDDERVTHHILDRPVDGMSLDHAGHRVYIQPQWVVDCVNARQILPTDPYRPGQTLPPHLSPFVDDREVARKGGYVPEEAREKLGLEAEYVGGADEDEDEDEDEDEDEDKAGSGRGDDKNVAAREQDAVEKHDKTPARPALEALLADPTGAGLLEAAELEAEATGGEDALLDLRAKHAASLKSHKKKKRTSTTQSPQLSEEAEARDMAKTLLSNKQRKLYTRMGQATGKKKEEKMRLEAKKRALSKNKKP.

The disordered stretch occupies residues 284-352; the sequence is DAAAAEASSN…DSDEEADDEA (69 aa). A compositionally biased stretch (low complexity) spans 285 to 294; it reads AAAAEASSNA. Positions 296 to 310 are enriched in basic and acidic residues; it reads TRKDGKKLSTRDVKR. Residues 342–352 show a composition bias toward acidic residues; it reads QDSDEEADDEA. Residues 387 to 486 form the BRCT domain; sequence PLPMLFSRYV…QILPTDPYRP (100 aa). Disordered regions lie at residues 508–580 and 612–684; these read GYVP…ALLA and AASL…NKKP. Acidic residues predominate over residues 528 to 543; the sequence is ADEDEDEDEDEDEDED. The segment covering 544-570 has biased composition (basic and acidic residues); it reads KAGSGRGDDKNVAAREQDAVEKHDKTP. Residues 612 to 624 are compositionally biased toward basic residues; it reads AASLKSHKKKKRT. Positions 663–675 are enriched in basic and acidic residues; it reads KKKEEKMRLEAKK.

Belongs to the pescadillo family. Component of the NOP7 complex, composed of ERB1, NOP7 and YTM1. The complex is held together by ERB1, which interacts with NOP7 via its N-terminal domain and with YTM1 via a high-affinity interaction between the seven-bladed beta-propeller domains of the 2 proteins. The NOP7 complex associates with the 66S pre-ribosome.

The protein resides in the nucleus. It localises to the nucleolus. The protein localises to the nucleoplasm. Functionally, component of the NOP7 complex, which is required for maturation of the 25S and 5.8S ribosomal RNAs and formation of the 60S ribosome. The chain is Pescadillo homolog from Malassezia globosa (strain ATCC MYA-4612 / CBS 7966) (Dandruff-associated fungus).